Here is a 257-residue protein sequence, read N- to C-terminus: Global transcriptional regulator CodY (257 aa).

The GAF domain stretch occupies residues 1–155 (MSLLSKTREL…AATVIGMEIL (155 aa)). Residues 203 to 222 (ASKVADRVGITRSVIVNALR) constitute a DNA-binding region (H-T-H motif).

The protein belongs to the CodY family.

The protein resides in the cytoplasm. In terms of biological role, DNA-binding global transcriptional regulator which is involved in the adaptive response to starvation and acts by directly or indirectly controlling the expression of numerous genes in response to nutrient availability. During rapid exponential growth, CodY is highly active and represses genes whose products allow adaptation to nutrient depletion. The sequence is that of Global transcriptional regulator CodY from Staphylococcus haemolyticus (strain JCSC1435).